A 663-amino-acid polypeptide reads, in one-letter code: Ankyrin repeat and SAM domain-containing protein 3 (663 aa).

Residues 1-421 (MSELSDEASE…PGSEPQAEKS (421 aa)) are interaction with NEK7. Residues serine 2 and serine 5 each carry the phosphoserine modification. ANK repeat units follow at residues 34–64 (DVPL…DLNK), 68–97 (GGWT…SVNV), 101–130 (EGQT…ELEM), 134–163 (QGWT…NANV), 168–197 (YGFT…KVDT), and 201–220 (SGAT…IVAL). Position 96 is a 3-hydroxyasparagine (asparagine 96). Phosphoserine is present on residues serine 201, serine 225, serine 243, serine 244, and serine 245. Disordered stretches follow at residues 242–261 (LSSS…CRKK) and 278–425 (TGLG…PYSG). Threonine 318 carries the post-translational modification Phosphothreonine. Serine 319 is modified (phosphoserine). A compositionally biased stretch (basic and acidic residues) spans 322–337 (NERDVESSSSSSREEP). Phosphoserine occurs at positions 366, 369, and 373. The span at 378-395 (KSSVRKQTRTYLKNKSRH) shows a compositional bias: basic residues. Residues 424–487 (SGPQDLATLL…TSAIARWHSS (64 aa)) enclose the SAM domain. Residues 500–575 (ADRLEAEMQE…AALVLDQLRA (76 aa)) are a coiled coil. Serine 540 is modified (phosphoserine). Disordered stretches follow at residues 585–604 (KQHH…PADS) and 637–663 (AEPG…SDVG). A compositionally biased stretch (acidic residues) spans 641-651 (ETTDAEWEEME). Positions 654 to 663 (IARRDDSDVG) are enriched in basic and acidic residues.

Homooligomer. Interacts (via SAM domain) with ANKS6 (via SAM domain). Interacts with BICC1. Interacts with NPHP1. Interacts with NEK8. Interacts with HIF1AN. Interacts with NEK7; this interaction alters the subcellular distribution of NEK7 by preventing its nuclear translocation. Hydroxylated at Asn-96, most probably by HIF1AN. Post-translationally, phosphorylations at Ser-5, Ser-225, Thr-318, Ser-319, Ser-366 and Ser-369 occur in a NEK7-dependent manner. In terms of processing, polyubiquitinated.

The protein localises to the cell projection. It localises to the cilium. The protein resides in the cytoplasm. Functionally, may be involved in vasopressin signaling in the kidney. The protein is Ankyrin repeat and SAM domain-containing protein 3 (Anks3) of Rattus norvegicus (Rat).